The chain runs to 50 residues: Omega-conotoxin Bu8 (50 aa).

Alanine 1 is a signal peptide. A propeptide spanning residues 2–24 (EDSRGTQLHRALRKATKLSESTR) is cleaved from the precursor. Intrachain disulfides connect cysteine 25-cysteine 40, cysteine 32-cysteine 44, and cysteine 39-cysteine 49. Position 49 is a cysteine amide (cysteine 49).

This sequence belongs to the conotoxin O1 superfamily. Expressed by the venom duct.

It localises to the secreted. Its function is as follows. Omega-conotoxins act at presynaptic membranes, they bind and block voltage-gated calcium channels (Cav). This toxin selectively and potently inhibits depolarization-activated rat Cav2.2/CACNA1B currents (IC(50)=89 nM), when coexpressed with alpha-2/delta-1 (CACNA2D1) and beta-3 (CACNB3) subunits. In vivo, is lethal to fish and displays potent analgesic activity in mice pain models of hot plate and acetic acid writhing but has fewer side effects on mouse motor function and lower toxicity in goldfish. Shows higher or similar analgesic activity in the pain models mentioned above compared to MVIIA, and lower side effects. In addition, it blocks Cav2.2/CACNA1B more rapidly than MVIIA and also dissociates more rapidly. This chain is Omega-conotoxin Bu8, found in Conus bullatus (Bubble cone).